The chain runs to 88 residues: Small ribosomal subunit protein uS15 (88 aa).

It belongs to the universal ribosomal protein uS15 family. Part of the 30S ribosomal subunit. Forms a bridge to the 50S subunit in the 70S ribosome, contacting the 23S rRNA.

In terms of biological role, one of the primary rRNA binding proteins, it binds directly to 16S rRNA where it helps nucleate assembly of the platform of the 30S subunit by binding and bridging several RNA helices of the 16S rRNA. Functionally, forms an intersubunit bridge (bridge B4) with the 23S rRNA of the 50S subunit in the ribosome. In Thermoanaerobacter pseudethanolicus (strain ATCC 33223 / 39E) (Clostridium thermohydrosulfuricum), this protein is Small ribosomal subunit protein uS15.